Consider the following 349-residue polypeptide: Fructose-1,6-bisphosphatase class 1 (349 aa).

Positions 91, 110, 112, and 113 each coordinate Mg(2+). Residues 113-116 (DGSS) and Asn-205 each bind substrate. Glu-277 contacts Mg(2+).

Belongs to the FBPase class 1 family. In terms of assembly, homotetramer. Mg(2+) serves as cofactor.

The protein localises to the cytoplasm. It catalyses the reaction beta-D-fructose 1,6-bisphosphate + H2O = beta-D-fructose 6-phosphate + phosphate. It participates in carbohydrate biosynthesis; gluconeogenesis. The chain is Fructose-1,6-bisphosphatase class 1 from Sinorhizobium medicae (strain WSM419) (Ensifer medicae).